The following is a 284-amino-acid chain: Acetyl-coenzyme A carboxylase carboxyl transferase subunit beta (284 aa).

The CoA carboxyltransferase N-terminal domain maps to 25–284 (LWVKCPETGA…LCKILTKSVQ (260 aa)).

It belongs to the AccD/PCCB family. Acetyl-CoA carboxylase is a heterohexamer composed of biotin carboxyl carrier protein (AccB), biotin carboxylase (AccC) and two subunits each of ACCase subunit alpha (AccA) and ACCase subunit beta (AccD).

It is found in the cytoplasm. It carries out the reaction N(6)-carboxybiotinyl-L-lysyl-[protein] + acetyl-CoA = N(6)-biotinyl-L-lysyl-[protein] + malonyl-CoA. Its pathway is lipid metabolism; malonyl-CoA biosynthesis; malonyl-CoA from acetyl-CoA: step 1/1. Component of the acetyl coenzyme A carboxylase (ACC) complex. Biotin carboxylase (BC) catalyzes the carboxylation of biotin on its carrier protein (BCCP) and then the CO(2) group is transferred by the transcarboxylase to acetyl-CoA to form malonyl-CoA. The polypeptide is Acetyl-coenzyme A carboxylase carboxyl transferase subunit beta (Liberibacter asiaticus (strain psy62)).